The sequence spans 422 residues: Glycine amidinotransferase, mitochondrial (422 aa).

The N-terminal 37 residues, 1 to 37 (MLRVRCVRGGSRGAEAVHYIGSMLRKGFVGWVQRSFQ), are a transit peptide targeting the mitochondrion. Active-site residues include Asp253 and His302. Catalysis depends on Cys406, which acts as the Amidino-cysteine intermediate.

This sequence belongs to the amidinotransferase family. In terms of assembly, homodimer.

Its subcellular location is the mitochondrion inner membrane. The catalysed reaction is L-arginine + glycine = guanidinoacetate + L-ornithine. The protein operates within amine and polyamine biosynthesis; creatine biosynthesis; creatine from L-arginine and glycine: step 1/2. Catalyzes the biosynthesis of guanidinoacetate, the immediate precursor of creatine. Creatine plays a vital role in energy metabolism in muscle tissues. May play a role in embryonic and central nervous system development. The chain is Glycine amidinotransferase, mitochondrial from Xenopus tropicalis (Western clawed frog).